Reading from the N-terminus, the 237-residue chain is Uridylate kinase (237 aa).

11–14 (KLSG) lines the ATP pocket. Gly53 lines the UMP pocket. Positions 54 and 58 each coordinate ATP. Residues Asp73 and 134 to 141 (TGNPFFTT) each bind UMP. 3 residues coordinate ATP: Thr161, Tyr167, and Asp170.

The protein belongs to the UMP kinase family. Homohexamer.

The protein localises to the cytoplasm. The enzyme catalyses UMP + ATP = UDP + ADP. It functions in the pathway pyrimidine metabolism; CTP biosynthesis via de novo pathway; UDP from UMP (UMPK route): step 1/1. Its activity is regulated as follows. Inhibited by UTP. In terms of biological role, catalyzes the reversible phosphorylation of UMP to UDP. The chain is Uridylate kinase from Burkholderia mallei (strain NCTC 10247).